A 615-amino-acid chain; its full sequence is 1-deoxy-D-xylulose-5-phosphate synthase (615 aa).

Thiamine diphosphate contacts are provided by residues histidine 76 and 117-119; that span reads GHS. Residue aspartate 148 participates in Mg(2+) binding. Thiamine diphosphate contacts are provided by residues 149-150, asparagine 177, tyrosine 284, and glutamate 365; that span reads GA. A Mg(2+)-binding site is contributed by asparagine 177.

It belongs to the transketolase family. DXPS subfamily. Homodimer. Mg(2+) is required as a cofactor. The cofactor is thiamine diphosphate.

It carries out the reaction D-glyceraldehyde 3-phosphate + pyruvate + H(+) = 1-deoxy-D-xylulose 5-phosphate + CO2. The protein operates within metabolic intermediate biosynthesis; 1-deoxy-D-xylulose 5-phosphate biosynthesis; 1-deoxy-D-xylulose 5-phosphate from D-glyceraldehyde 3-phosphate and pyruvate: step 1/1. Catalyzes the acyloin condensation reaction between C atoms 2 and 3 of pyruvate and glyceraldehyde 3-phosphate to yield 1-deoxy-D-xylulose-5-phosphate (DXP). This Francisella tularensis subsp. tularensis (strain FSC 198) protein is 1-deoxy-D-xylulose-5-phosphate synthase.